Consider the following 339-residue polypeptide: DNA-directed RNA polymerase subunit alpha (339 aa).

Residues 1–235 (MTIQKNWQEL…DQLNVFVNFE (235 aa)) are alpha N-terminal domain (alpha-NTD). An alpha C-terminal domain (alpha-CTD) region spans residues 251–339 (FNPAFLKKVD…ELAKRFEDHY (89 aa)).

It belongs to the RNA polymerase alpha chain family. Homodimer. The RNAP catalytic core consists of 2 alpha, 1 beta, 1 beta' and 1 omega subunit. When a sigma factor is associated with the core the holoenzyme is formed, which can initiate transcription.

It catalyses the reaction RNA(n) + a ribonucleoside 5'-triphosphate = RNA(n+1) + diphosphate. Functionally, DNA-dependent RNA polymerase catalyzes the transcription of DNA into RNA using the four ribonucleoside triphosphates as substrates. This Rhodopseudomonas palustris (strain ATCC BAA-98 / CGA009) protein is DNA-directed RNA polymerase subunit alpha.